The primary structure comprises 289 residues: Release factor glutamine methyltransferase (289 aa).

Residues 130–134 (GTGTG), Asp-153, Trp-182, and Asn-196 each bind S-adenosyl-L-methionine. A substrate-binding site is contributed by 196–199 (NPPY).

It belongs to the protein N5-glutamine methyltransferase family. PrmC subfamily.

The catalysed reaction is L-glutaminyl-[peptide chain release factor] + S-adenosyl-L-methionine = N(5)-methyl-L-glutaminyl-[peptide chain release factor] + S-adenosyl-L-homocysteine + H(+). In terms of biological role, methylates the class 1 translation termination release factors RF1/PrfA and RF2/PrfB on the glutamine residue of the universally conserved GGQ motif. This Agrobacterium fabrum (strain C58 / ATCC 33970) (Agrobacterium tumefaciens (strain C58)) protein is Release factor glutamine methyltransferase.